The chain runs to 161 residues: Peptidyl-prolyl cis-trans isomerase-like 3 (161 aa).

The residue at position 2 (Ser-2) is an N-acetylserine. Residues 2 to 154 form the PPIase cyclophilin-type domain; that stretch reads SVTLHTDVGD…NDVHIKDITI (153 aa). An Omega-N-methylarginine modification is found at Arg-61.

Belongs to the cyclophilin-type PPIase family. PPIL3 subfamily. In terms of assembly, identified in the spliceosome C complex.

The enzyme catalyses [protein]-peptidylproline (omega=180) = [protein]-peptidylproline (omega=0). Its function is as follows. PPIases accelerate the folding of proteins. It catalyzes the cis-trans isomerization of proline imidic peptide bonds in oligopeptides. May be involved in pre-mRNA splicing. This is Peptidyl-prolyl cis-trans isomerase-like 3 (Ppil3) from Mus musculus (Mouse).